The chain runs to 346 residues: MAISKLIPTLVLFVLFSFDVSVAHPGLGFGWGSNSPIGGSFYSNLYPQFYQFSCPQADEIVMTVLEKAIAKEPRMAASLLRLHFHDCFVQGCDASILLDDSATIRSEKNAGPNKNSVRGFQVIDEIKAKLEQACPQTVSCADILALAARGSTILSGGPSWELPLGRRDSRTASLNGANTNIPAPNSTIQNLLTMFQRKGLNEEDLVSLSGGHTIGVARCTTFKQRLYNQNGNNQPDETLERSYYYGLRSICPPTGGDNNISPLDLASPARFDNTYFKLLLWGKGLLTSDEVLLTGNVGKTGALVKAYAEDERLFFQQFAKSMVNMGNIQPLTGFNGEIRKSCHVIN.

The signal sequence occupies residues 1-23; it reads MAISKLIPTLVLFVLFSFDVSVA. 4 cysteine pairs are disulfide-bonded: Cys54–Cys134, Cys87–Cys92, Cys140–Cys342, and Cys219–Cys251. His85 (proton acceptor) is an active-site residue. Ca(2+) contacts are provided by Asp86, Val89, Gly91, Asp93, and Ser95. Pro182 contributes to the substrate binding site. An N-linked (GlcNAc...) asparagine glycan is attached at Asn185. His212 is a binding site for heme b. Position 213 (Thr213) interacts with Ca(2+). Residues Asp264, Ser267, and Asp272 each coordinate Ca(2+).

The protein belongs to the peroxidase family. Classical plant (class III) peroxidase subfamily. Heme b is required as a cofactor. Requires Ca(2+) as cofactor.

It is found in the secreted. The enzyme catalyses 2 a phenolic donor + H2O2 = 2 a phenolic radical donor + 2 H2O. Its function is as follows. Removal of H(2)O(2), oxidation of toxic reductants, biosynthesis and degradation of lignin, suberization, auxin catabolism, response to environmental stresses such as wounding, pathogen attack and oxidative stress. These functions might be dependent on each isozyme/isoform in each plant tissue. In Arabidopsis thaliana (Mouse-ear cress), this protein is Peroxidase 9 (PER9).